The primary structure comprises 123 residues: Large ribosomal subunit protein uL29 (123 aa).

The residue at position 19 (Lys-19) is an N6-acetyllysine. A Glycyl lysine isopeptide (Lys-Gly) (interchain with G-Cter in SUMO2) cross-link involves residue Lys-25. Ser-29 is subject to Phosphoserine. Lys-43 carries the N6-acetyllysine modification. The tract at residues Glu-100–Ala-123 is disordered.

It belongs to the universal ribosomal protein uL29 family. Component of the large ribosomal subunit.

It is found in the cytoplasm. In terms of biological role, component of the large ribosomal subunit. The ribosome is a large ribonucleoprotein complex responsible for the synthesis of proteins in the cell. This chain is Large ribosomal subunit protein uL29 (Rpl35), found in Mus musculus (Mouse).